Here is an 82-residue protein sequence, read N- to C-terminus: Small ribosomal subunit protein bS20 (82 aa).

The protein belongs to the bacterial ribosomal protein bS20 family.

Its function is as follows. Binds directly to 16S ribosomal RNA. This Streptococcus pyogenes serotype M12 (strain MGAS2096) protein is Small ribosomal subunit protein bS20.